The sequence spans 260 residues: Adenosylcobinamide-GDP ribazoletransferase (260 aa).

Helical transmembrane passes span 42–62 (PLAG…ANAI), 64–84 (LPPL…TGAL), 117–137 (FAAL…MAII), 144–164 (YALL…LAFW), 192–212 (GLGL…VALI), 214–234 (ALVL…AKIG), and 240–260 (TLGA…VMAL).

This sequence belongs to the CobS family. Mg(2+) is required as a cofactor.

The protein resides in the cell inner membrane. The enzyme catalyses alpha-ribazole + adenosylcob(III)inamide-GDP = adenosylcob(III)alamin + GMP + H(+). It catalyses the reaction alpha-ribazole 5'-phosphate + adenosylcob(III)inamide-GDP = adenosylcob(III)alamin 5'-phosphate + GMP + H(+). It participates in cofactor biosynthesis; adenosylcobalamin biosynthesis; adenosylcobalamin from cob(II)yrinate a,c-diamide: step 7/7. Its function is as follows. Joins adenosylcobinamide-GDP and alpha-ribazole to generate adenosylcobalamin (Ado-cobalamin). Also synthesizes adenosylcobalamin 5'-phosphate from adenosylcobinamide-GDP and alpha-ribazole 5'-phosphate. This chain is Adenosylcobinamide-GDP ribazoletransferase, found in Brucella ovis (strain ATCC 25840 / 63/290 / NCTC 10512).